The following is a 49-amino-acid chain: Large ribosomal subunit protein bL33A (49 aa).

Belongs to the bacterial ribosomal protein bL33 family.

This Staphylococcus saprophyticus subsp. saprophyticus (strain ATCC 15305 / DSM 20229 / NCIMB 8711 / NCTC 7292 / S-41) protein is Large ribosomal subunit protein bL33A.